The chain runs to 65 residues: Temporin-LK1 (65 aa).

The signal sequence occupies residues 1–22 (MFTMKKSLLLLFFLGAINLPLC). Positions 23–44 (QEERNAEEERRDGDDEGSVEVQ) are excised as a propeptide. A Phenylalanine amide modification is found at F63.

As to expression, expressed by the skin glands.

The protein localises to the secreted. In terms of biological role, has antimicrobial activity against Gram-positive bacteria S.aureus ATCC 2592 (MIC=2.5 uM), S.aureus ATCC 43300 (MIC=2.5 uM) and B.subtilis (MIC=15.0 uM), against Gram-negative bacteria E.coli ML-35P (MIC=30.0 uM), P.aeruginosa PA01 (MIC=2.5 uM) and P.aeruginosa ATCC 27853 (MIC=2.5 uM) and against fungus C.albicans ATCC 2002 (MIC=5.0 uM). This Limnonectes kuhlii (Kuhl's Creek frog) protein is Temporin-LK1.